A 513-amino-acid chain; its full sequence is Maturase K (513 aa).

This sequence belongs to the intron maturase 2 family. MatK subfamily.

It is found in the plastid. The protein localises to the chloroplast. In terms of biological role, usually encoded in the trnK tRNA gene intron. Probably assists in splicing its own and other chloroplast group II introns. This is Maturase K from Phragmites australis (Common reed).